The chain runs to 274 residues: Putative HTH-type transcriptional regulator RmpR (274 aa).

In terms of domain architecture, HTH gntR-type spans 18 to 88; that stretch reads IERADAIVER…RSGGTFVVNQ (71 aa). Residues 46 to 65 constitute a DNA-binding region (H-T-H motif); it reads EAALSEMFGVGGATLREALS. The span at 250 to 265 shows a compositional bias: polar residues; it reads SRPSSPATAPDGSSSA. The segment at 250 to 274 is disordered; that stretch reads SRPSSPATAPDGSSSAEAAMIQEGQ.

Its function is as follows. May regulate the transcription of the rmpAB operon. The chain is Putative HTH-type transcriptional regulator RmpR (rmpR) from Mycobacterium gastri.